Consider the following 76-residue polypeptide: Small ribosomal subunit protein bS18 (76 aa).

It belongs to the bacterial ribosomal protein bS18 family. Part of the 30S ribosomal subunit. Forms a tight heterodimer with protein bS6.

In terms of biological role, binds as a heterodimer with protein bS6 to the central domain of the 16S rRNA, where it helps stabilize the platform of the 30S subunit. The protein is Small ribosomal subunit protein bS18 of Neisseria gonorrhoeae (strain ATCC 700825 / FA 1090).